Consider the following 335-residue polypeptide: Phosphatidylcholine-sterol acyltransferase (335 aa).

Positions 1 to 18 (MKKWFVCLLGLVALTVQA) are cleaved as a signal peptide. The active-site Nucleophile is the S34. Active-site residues include D306 and H309.

Belongs to the 'GDSL' lipolytic enzyme family.

It carries out the reaction a sterol + a 1,2-diacyl-sn-glycero-3-phosphocholine = a sterol ester + a 1-acyl-sn-glycero-3-phosphocholine. Fatty acid transfer between phosphatidylcholine and cholesterol. The polypeptide is Phosphatidylcholine-sterol acyltransferase (Aeromonas hydrophila).